Reading from the N-terminus, the 122-residue chain is uncharacterized protein (122 aa).

The protein resides in the mitochondrion. This is an uncharacterized protein from Arabidopsis thaliana (Mouse-ear cress).